Reading from the N-terminus, the 341-residue chain is UDP-3-O-acylglucosamine N-acyltransferase (341 aa).

His241 (proton acceptor) is an active-site residue.

It belongs to the transferase hexapeptide repeat family. LpxD subfamily. In terms of assembly, homotrimer.

It catalyses the reaction a UDP-3-O-[(3R)-3-hydroxyacyl]-alpha-D-glucosamine + a (3R)-hydroxyacyl-[ACP] = a UDP-2-N,3-O-bis[(3R)-3-hydroxyacyl]-alpha-D-glucosamine + holo-[ACP] + H(+). It functions in the pathway bacterial outer membrane biogenesis; LPS lipid A biosynthesis. Functionally, catalyzes the N-acylation of UDP-3-O-acylglucosamine using 3-hydroxyacyl-ACP as the acyl donor. Is involved in the biosynthesis of lipid A, a phosphorylated glycolipid that anchors the lipopolysaccharide to the outer membrane of the cell. This is UDP-3-O-acylglucosamine N-acyltransferase from Christiangramia forsetii (strain DSM 17595 / CGMCC 1.15422 / KT0803) (Gramella forsetii).